The primary structure comprises 200 residues: dITP/XTP pyrophosphatase (200 aa).

Residue 8–13 (THNPNK) participates in substrate binding. The Mg(2+) site is built by Glu-41 and Asp-71. The active-site Proton acceptor is Asp-71. Substrate contacts are provided by residues Thr-72, 153–156 (FGYD), Lys-176, and 181–182 (HR).

Belongs to the HAM1 NTPase family. In terms of assembly, homodimer. The cofactor is Mg(2+).

The catalysed reaction is XTP + H2O = XMP + diphosphate + H(+). It catalyses the reaction dITP + H2O = dIMP + diphosphate + H(+). The enzyme catalyses ITP + H2O = IMP + diphosphate + H(+). In terms of biological role, pyrophosphatase that catalyzes the hydrolysis of nucleoside triphosphates to their monophosphate derivatives, with a high preference for the non-canonical purine nucleotides XTP (xanthosine triphosphate), dITP (deoxyinosine triphosphate) and ITP. Seems to function as a house-cleaning enzyme that removes non-canonical purine nucleotides from the nucleotide pool, thus preventing their incorporation into DNA/RNA and avoiding chromosomal lesions. This is dITP/XTP pyrophosphatase from Caldanaerobacter subterraneus subsp. tengcongensis (strain DSM 15242 / JCM 11007 / NBRC 100824 / MB4) (Thermoanaerobacter tengcongensis).